We begin with the raw amino-acid sequence, 150 residues long: MADKLHILLLNGPNLNMLGTREPDKYGTLTLTEIVNRLNAEADALNVTLDHLQSNAEYALIDRIHQAKDTVDYILINPAAFTHTSVAIRDALLAVSIPFIEIHLSNVHAREPFRQHSYLSDIAAGVICGFGADGYSYALQTAVKRLSQSH.

Tyr26 serves as the catalytic Proton acceptor. Positions 77, 83, and 90 each coordinate substrate. His103 (proton donor) is an active-site residue. Substrate is bound by residues Leu104 to Ser105 and Arg114.

The protein belongs to the type-II 3-dehydroquinase family. In terms of assembly, homododecamer.

The enzyme catalyses 3-dehydroquinate = 3-dehydroshikimate + H2O. Its pathway is metabolic intermediate biosynthesis; chorismate biosynthesis; chorismate from D-erythrose 4-phosphate and phosphoenolpyruvate: step 3/7. Functionally, catalyzes a trans-dehydration via an enolate intermediate. The sequence is that of 3-dehydroquinate dehydratase from Citrobacter koseri (strain ATCC BAA-895 / CDC 4225-83 / SGSC4696).